The primary structure comprises 332 residues: Fructose-1,6-bisphosphatase class 1 (332 aa).

Mg(2+) is bound by residues Glu-89, Asp-110, Leu-112, and Asp-113. Substrate-binding positions include 113–116 (DGSS), Asn-206, Tyr-239, 257–259 (YLY), and Lys-269. Mg(2+) is bound at residue Glu-275.

The protein belongs to the FBPase class 1 family. As to quaternary structure, homotetramer. Mg(2+) serves as cofactor.

Its subcellular location is the cytoplasm. It catalyses the reaction beta-D-fructose 1,6-bisphosphate + H2O = beta-D-fructose 6-phosphate + phosphate. Its pathway is carbohydrate biosynthesis; gluconeogenesis. In Cronobacter sakazakii (strain ATCC BAA-894) (Enterobacter sakazakii), this protein is Fructose-1,6-bisphosphatase class 1.